Consider the following 78-residue polypeptide: Acyl carrier protein (78 aa).

The region spanning 2–77 (SDILERVRKI…DAVKFITEKT (76 aa)) is the Carrier domain. At S37 the chain carries O-(pantetheine 4'-phosphoryl)serine.

Belongs to the acyl carrier protein (ACP) family. Post-translationally, 4'-phosphopantetheine is transferred from CoA to a specific serine of apo-ACP by AcpS. This modification is essential for activity because fatty acids are bound in thioester linkage to the sulfhydryl of the prosthetic group.

The protein resides in the cytoplasm. It functions in the pathway lipid metabolism; fatty acid biosynthesis. Carrier of the growing fatty acid chain in fatty acid biosynthesis. In Caulobacter vibrioides (strain ATCC 19089 / CIP 103742 / CB 15) (Caulobacter crescentus), this protein is Acyl carrier protein.